Consider the following 353-residue polypeptide: DNA integrity scanning protein DisA (353 aa).

Residues 6–144 (DKELMNILKI…GGIKYVLRDS (139 aa)) form the DAC domain. ATP contacts are provided by residues Gly-73, Leu-91, and 104 to 108 (TRHRT).

Belongs to the DisA family. As to quaternary structure, homooctamer. Mg(2+) is required as a cofactor.

It carries out the reaction 2 ATP = 3',3'-c-di-AMP + 2 diphosphate. In terms of biological role, participates in a DNA-damage check-point that is active prior to asymmetric division when DNA is damaged. DisA forms globular foci that rapidly scan along the chromosomes during sporulation, searching for lesions. When a lesion is present, DisA pauses at the lesion site. This triggers a cellular response that culminates in a temporary block in sporulation initiation. Functionally, also has diadenylate cyclase activity, catalyzing the condensation of 2 ATP molecules into cyclic di-AMP (c-di-AMP). c-di-AMP acts as a signaling molecule that couples DNA integrity with progression of sporulation. The rise in c-di-AMP level generated by DisA while scanning the chromosome, operates as a positive signal that advances sporulation; upon encountering a lesion, the DisA focus arrests at the damaged site and halts c-di-AMP synthesis. This is DNA integrity scanning protein DisA from Clostridium botulinum (strain Kyoto / Type A2).